Here is a 483-residue protein sequence, read N- to C-terminus: Replication factor C large subunit (483 aa).

ATP is bound at residue 43-50; that stretch reads GKPGIGKT. Over residues 417–442 the composition is skewed to basic and acidic residues; that stretch reads ELKKKKKEEDAKGKKARGSKKEKEPI. Positions 417-483 are disordered; the sequence is ELKKKKKEED…KSSQSTLFSF (67 aa). Polar residues predominate over residues 448–457; it reads SIDSFSSQEP.

The protein belongs to the activator 1 small subunits family. RfcL subfamily. As to quaternary structure, heteromultimer composed of small subunits (RfcS) and large subunits (RfcL).

Its function is as follows. Part of the RFC clamp loader complex which loads the PCNA sliding clamp onto DNA. The protein is Replication factor C large subunit of Methanospirillum hungatei JF-1 (strain ATCC 27890 / DSM 864 / NBRC 100397 / JF-1).